The primary structure comprises 122 residues: Large ribosomal subunit protein bL12 (122 aa).

It belongs to the bacterial ribosomal protein bL12 family. In terms of assembly, homodimer. Part of the ribosomal stalk of the 50S ribosomal subunit. Forms a multimeric L10(L12)X complex, where L10 forms an elongated spine to which 2 to 4 L12 dimers bind in a sequential fashion. Binds GTP-bound translation factors.

Functionally, forms part of the ribosomal stalk which helps the ribosome interact with GTP-bound translation factors. Is thus essential for accurate translation. In Actinobacillus succinogenes (strain ATCC 55618 / DSM 22257 / CCUG 43843 / 130Z), this protein is Large ribosomal subunit protein bL12.